Reading from the N-terminus, the 274-residue chain is Proteasome subunit beta (274 aa).

Positions 1-52 (MADPMGGAGRLPAVFMTPGTSSFTDFLSQSAPHLLPGARGGLPGPVTEVAHG) are cleaved as a propeptide — removed in mature form; by autocatalysis. The active-site Nucleophile is the T53.

It belongs to the peptidase T1B family. The 20S proteasome core is composed of 14 alpha and 14 beta subunits that assemble into four stacked heptameric rings, resulting in a barrel-shaped structure. The two inner rings, each composed of seven catalytic beta subunits, are sandwiched by two outer rings, each composed of seven alpha subunits. The catalytic chamber with the active sites is on the inside of the barrel. Has a gated structure, the ends of the cylinder being occluded by the N-termini of the alpha-subunits. Is capped by the proteasome-associated ATPase, ARC.

The protein localises to the cytoplasm. It carries out the reaction Cleavage of peptide bonds with very broad specificity.. It functions in the pathway protein degradation; proteasomal Pup-dependent pathway. Its activity is regulated as follows. The formation of the proteasomal ATPase ARC-20S proteasome complex, likely via the docking of the C-termini of ARC into the intersubunit pockets in the alpha-rings, may trigger opening of the gate for substrate entry. Interconversion between the open-gate and close-gate conformations leads to a dynamic regulation of the 20S proteasome proteolysis activity. Functionally, component of the proteasome core, a large protease complex with broad specificity involved in protein degradation. The chain is Proteasome subunit beta from Frankia alni (strain DSM 45986 / CECT 9034 / ACN14a).